A 240-amino-acid polypeptide reads, in one-letter code: UDP-2,3-diacylglucosamine hydrolase (240 aa).

The Mn(2+) site is built by aspartate 8, histidine 10, aspartate 41, asparagine 79, and histidine 114. Residue 79 to 80 coordinates substrate; the sequence is NR. 5 residues coordinate substrate: aspartate 122, serine 160, asparagine 164, lysine 167, and histidine 195. Mn(2+) contacts are provided by histidine 195 and histidine 197.

This sequence belongs to the LpxH family. Mn(2+) is required as a cofactor.

Its subcellular location is the cell inner membrane. It catalyses the reaction UDP-2-N,3-O-bis[(3R)-3-hydroxytetradecanoyl]-alpha-D-glucosamine + H2O = 2-N,3-O-bis[(3R)-3-hydroxytetradecanoyl]-alpha-D-glucosaminyl 1-phosphate + UMP + 2 H(+). The protein operates within glycolipid biosynthesis; lipid IV(A) biosynthesis; lipid IV(A) from (3R)-3-hydroxytetradecanoyl-[acyl-carrier-protein] and UDP-N-acetyl-alpha-D-glucosamine: step 4/6. Its function is as follows. Hydrolyzes the pyrophosphate bond of UDP-2,3-diacylglucosamine to yield 2,3-diacylglucosamine 1-phosphate (lipid X) and UMP by catalyzing the attack of water at the alpha-P atom. Involved in the biosynthesis of lipid A, a phosphorylated glycolipid that anchors the lipopolysaccharide to the outer membrane of the cell. The chain is UDP-2,3-diacylglucosamine hydrolase from Yersinia pseudotuberculosis serotype O:1b (strain IP 31758).